We begin with the raw amino-acid sequence, 183 residues long: 2-C-methyl-D-erythritol 2,4-cyclodiphosphate synthase (183 aa).

A divalent metal cation-binding residues include D8 and H10. 4-CDP-2-C-methyl-D-erythritol 2-phosphate-binding positions include 8-10 (DVH) and 34-35 (HS). Position 42 (H42) interacts with a divalent metal cation. 4-CDP-2-C-methyl-D-erythritol 2-phosphate is bound by residues 56–58 (DIG), 61–65 (FPDTD), 132–135 (TTEE), and F139.

Belongs to the IspF family. As to quaternary structure, homotrimer. A divalent metal cation serves as cofactor.

It catalyses the reaction 4-CDP-2-C-methyl-D-erythritol 2-phosphate = 2-C-methyl-D-erythritol 2,4-cyclic diphosphate + CMP. It functions in the pathway isoprenoid biosynthesis; isopentenyl diphosphate biosynthesis via DXP pathway; isopentenyl diphosphate from 1-deoxy-D-xylulose 5-phosphate: step 4/6. Involved in the biosynthesis of isopentenyl diphosphate (IPP) and dimethylallyl diphosphate (DMAPP), two major building blocks of isoprenoid compounds. Catalyzes the conversion of 4-diphosphocytidyl-2-C-methyl-D-erythritol 2-phosphate (CDP-ME2P) to 2-C-methyl-D-erythritol 2,4-cyclodiphosphate (ME-CPP) with a corresponding release of cytidine 5-monophosphate (CMP). The chain is 2-C-methyl-D-erythritol 2,4-cyclodiphosphate synthase from Lachnospira eligens (strain ATCC 27750 / DSM 3376 / VPI C15-48 / C15-B4) (Eubacterium eligens).